Here is a 702-residue protein sequence, read N- to C-terminus: Translation factor GUF1 homolog, chloroplastic (702 aa).

A compositionally biased stretch (low complexity) spans 1-30 (MASAAPASRGAARASTAARDAPFAAAARGP). Residues 1–41 (MASAAPASRGAARASTAARDAPFAAAARGPGRFRRDGNGRN) form a disordered region. In terms of domain architecture, tr-type G spans 87 to 283 (SQIRNFSIIA…NIVKMIPPPP (197 aa)). GTP contacts are provided by residues 96 to 103 (AHIDHGKS), 162 to 166 (DTPGH), and 216 to 219 (NKID).

The protein belongs to the TRAFAC class translation factor GTPase superfamily. Classic translation factor GTPase family. LepA subfamily.

Its subcellular location is the plastid. It is found in the chloroplast. It carries out the reaction GTP + H2O = GDP + phosphate + H(+). In terms of biological role, promotes chloroplast protein synthesis. May act as a fidelity factor of the translation reaction, by catalyzing a one-codon backward translocation of tRNAs on improperly translocated ribosomes. This chain is Translation factor GUF1 homolog, chloroplastic, found in Micromonas pusilla (strain CCMP1545) (Picoplanktonic green alga).